A 509-amino-acid chain; its full sequence is Putative cytochrome P450 CYP13A8 (509 aa).

Heme is bound at residue C455.

It belongs to the cytochrome P450 family. Heme is required as a cofactor.

Functionally, cytochromes P450 are a group of heme-thiolate monooxygenases. They oxidize a variety of structurally unrelated compounds, including steroids, fatty acids, and xenobiotics. The polypeptide is Putative cytochrome P450 CYP13A8 (cyp-13A8) (Caenorhabditis elegans).